The chain runs to 197 residues: GTP cyclohydrolase-2 (197 aa).

50 to 54 is a binding site for GTP; that stretch reads RIHSE. Zn(2+) is bound by residues Cys55, Cys66, and Cys68. GTP-binding positions include Gln71, 93–95, and Thr115; that span reads EGR. Asp127 acts as the Proton acceptor in catalysis. Arg129 (nucleophile) is an active-site residue. Positions 150 and 155 each coordinate GTP.

Belongs to the GTP cyclohydrolase II family. Requires Zn(2+) as cofactor.

The catalysed reaction is GTP + 4 H2O = 2,5-diamino-6-hydroxy-4-(5-phosphoribosylamino)-pyrimidine + formate + 2 phosphate + 3 H(+). The protein operates within cofactor biosynthesis; riboflavin biosynthesis; 5-amino-6-(D-ribitylamino)uracil from GTP: step 1/4. Catalyzes the conversion of GTP to 2,5-diamino-6-ribosylamino-4(3H)-pyrimidinone 5'-phosphate (DARP), formate and pyrophosphate. This is GTP cyclohydrolase-2 from Neisseria meningitidis serogroup A / serotype 4A (strain DSM 15465 / Z2491).